The sequence spans 584 residues: Chaperonin GroEL 1 (584 aa).

ATP is bound by residues 29–32 (TIGP), 86–90 (DGTTT), Gly413, and Asp492. Residues 523-542 (EPEAAAPGGPGGDPMGGMGG) form a disordered region. Over residues 530–542 (GGPGGDPMGGMGG) the composition is skewed to gly residues.

The protein belongs to the chaperonin (HSP60) family. As to quaternary structure, forms a cylinder of 14 subunits composed of two heptameric rings stacked back-to-back. Interacts with the co-chaperonin GroES.

It localises to the cytoplasm. It catalyses the reaction ATP + H2O + a folded polypeptide = ADP + phosphate + an unfolded polypeptide.. Together with its co-chaperonin GroES, plays an essential role in assisting protein folding. The GroEL-GroES system forms a nano-cage that allows encapsulation of the non-native substrate proteins and provides a physical environment optimized to promote and accelerate protein folding. The polypeptide is Chaperonin GroEL 1 (Prochlorococcus marinus (strain MIT 9312)).